Reading from the N-terminus, the 580-residue chain is Arginine--tRNA ligase (580 aa).

Residues 131 to 141 (ANPTGPMHVGH) carry the 'HIGH' region motif.

Belongs to the class-I aminoacyl-tRNA synthetase family. Monomer.

Its subcellular location is the cytoplasm. The catalysed reaction is tRNA(Arg) + L-arginine + ATP = L-arginyl-tRNA(Arg) + AMP + diphosphate. In Cereibacter sphaeroides (strain ATCC 17025 / ATH 2.4.3) (Rhodobacter sphaeroides), this protein is Arginine--tRNA ligase.